The chain runs to 921 residues: TRPM8 channel-associated factor 1 (921 aa).

The Peptidase M60 domain occupies 542-841; the sequence is YCWMSTGLYI…TYLQLQEAFG (300 aa).

It belongs to the TCAF family. In terms of assembly, interacts with TRPM8 (via N-terminus and C-terminus domains); the interaction inhibits TRPM8 channel activity. Interacts with TRPV6. In terms of tissue distribution, isoform 2 is expressed in the prostate and strongly expressed in cancerous prostate samples.

Its subcellular location is the cell membrane. In terms of biological role, positively regulates the plasma membrane cation channel TRPM8 activity. Involved in the recruitment of TRPM8 to the cell surface. Promotes prostate cancer cell migration inhibition in a TRPM8-dependent manner. This is TRPM8 channel-associated factor 1 from Homo sapiens (Human).